Reading from the N-terminus, the 441-residue chain is Trigger factor (441 aa).

The region spanning 161 to 246 is the PPIase FKBP-type domain; that stretch reads GDQVTIDFVG…VSEVAEQILP (86 aa).

This sequence belongs to the FKBP-type PPIase family. Tig subfamily.

It localises to the cytoplasm. The enzyme catalyses [protein]-peptidylproline (omega=180) = [protein]-peptidylproline (omega=0). In terms of biological role, involved in protein export. Acts as a chaperone by maintaining the newly synthesized protein in an open conformation. Functions as a peptidyl-prolyl cis-trans isomerase. The sequence is that of Trigger factor from Marinomonas sp. (strain MWYL1).